We begin with the raw amino-acid sequence, 334 residues long: MKEKIAYLGMGIWGFCLASLLANKGYHVVGWARNAELIAQLQTEKRHPQVPDVPIHPNLSFTTDMAEAVENASMIVEGVSSAGIRPVSEQLKTITNLNVPFVITSKGIEQHTGLLLSEIVVEIFGNDASQYLGYLSGPSIAREVLKGCPCSVVISAYNPDTLKKIHNAFLTPTFRVYPNSDLKGVALGGALKNIIAIACGISDGFRFGDNAKSGLVTRGLHEIRKFATIMNCRPDTLNGLAGLGDLCTTCFSSLSRNTKFGKLIAQGMTVAQAKAEIGMVVEGVYTALSAYQIAKHHKIDMPITTGIYRVLYENLDIQEGIAALLQRNTKEEYL.

The NADPH site is built by Trp-13, Arg-33, and Lys-106. 3 residues coordinate sn-glycerol 3-phosphate: Lys-106, Gly-137, and Ser-139. Ala-141 contributes to the NADPH binding site. Sn-glycerol 3-phosphate is bound by residues Lys-192, Asp-245, Ser-255, Arg-256, and Asn-257. Lys-192 serves as the catalytic Proton acceptor. Arg-256 is an NADPH binding site. NADPH contacts are provided by Val-280 and Glu-282.

Belongs to the NAD-dependent glycerol-3-phosphate dehydrogenase family.

The protein resides in the cytoplasm. The catalysed reaction is sn-glycerol 3-phosphate + NAD(+) = dihydroxyacetone phosphate + NADH + H(+). It carries out the reaction sn-glycerol 3-phosphate + NADP(+) = dihydroxyacetone phosphate + NADPH + H(+). It participates in membrane lipid metabolism; glycerophospholipid metabolism. Catalyzes the reduction of the glycolytic intermediate dihydroxyacetone phosphate (DHAP) to sn-glycerol 3-phosphate (G3P), the key precursor for phospholipid synthesis. This is Glycerol-3-phosphate dehydrogenase [NAD(P)+] from Chlamydia caviae (strain ATCC VR-813 / DSM 19441 / 03DC25 / GPIC) (Chlamydophila caviae).